Reading from the N-terminus, the 195-residue chain is Protein GrpE (195 aa).

It belongs to the GrpE family. Homodimer.

It localises to the cytoplasm. In terms of biological role, participates actively in the response to hyperosmotic and heat shock by preventing the aggregation of stress-denatured proteins, in association with DnaK and GrpE. It is the nucleotide exchange factor for DnaK and may function as a thermosensor. Unfolded proteins bind initially to DnaJ; upon interaction with the DnaJ-bound protein, DnaK hydrolyzes its bound ATP, resulting in the formation of a stable complex. GrpE releases ADP from DnaK; ATP binding to DnaK triggers the release of the substrate protein, thus completing the reaction cycle. Several rounds of ATP-dependent interactions between DnaJ, DnaK and GrpE are required for fully efficient folding. The polypeptide is Protein GrpE (Francisella tularensis subsp. novicida (strain U112)).